We begin with the raw amino-acid sequence, 490 residues long: Cysteine--tRNA ligase (490 aa).

Residue C31 coordinates Zn(2+). A 'HIGH' region motif is present at residues 33–43 (PTVYGDAHLGH). Zn(2+) contacts are provided by C226, H251, and E255. The 'KMSKS' region motif lies at 283–287 (KMGKS). K286 contributes to the ATP binding site.

This sequence belongs to the class-I aminoacyl-tRNA synthetase family. Monomer. Zn(2+) serves as cofactor.

It is found in the cytoplasm. It catalyses the reaction tRNA(Cys) + L-cysteine + ATP = L-cysteinyl-tRNA(Cys) + AMP + diphosphate. The sequence is that of Cysteine--tRNA ligase from Porphyromonas gingivalis (strain ATCC BAA-308 / W83).